Here is a 545-residue protein sequence, read N- to C-terminus: Capsular polysaccharide phosphotransferase SacB (545 aa).

The protein belongs to the stealth family.

Its function is as follows. May be the polymerase that links individual UDP-N-acetyl-D-mannosamine monomers. In serotype A the capsule is composed of repeated units of (alpha 1-6)-linked N-acetyl-D-mannosamine-1-phosphate. This Neisseria meningitidis serogroup A protein is Capsular polysaccharide phosphotransferase SacB (sacB).